The following is a 470-amino-acid chain: Probable G-protein coupled receptor 152 (470 aa).

Residues 1 to 25 form a disordered region; it reads MDTTMEADLGATGHRPRTELDDEDS. Residues 1 to 33 are Extracellular-facing; it reads MDTTMEADLGATGHRPRTELDDEDSYPQGGWDT. Residues 34–54 form a helical membrane-spanning segment; that stretch reads VFLVALLLLGLPANGLMAWLA. Residues 55-65 are Cytoplasmic-facing; that stretch reads GSQARHGAGTR. The chain crosses the membrane as a helical span at residues 66 to 86; it reads LALLLLSLALSDFLFLAAAAF. The Extracellular portion of the chain corresponds to 87–105; the sequence is QILEIRHGGHWPLGTAACR. The cysteines at positions 104 and 182 are disulfide-linked. A helical transmembrane segment spans residues 106–126; it reads FYYFLWGVSYSSGLFLLAALS. Topologically, residues 127 to 148 are cytoplasmic; it reads LDRCLLALCPHWYPGHRPVRLP. A helical transmembrane segment spans residues 149–169; sequence LWVCAGVWVLATLFSVPWLVF. At 170 to 194 the chain is on the extracellular side; the sequence is PEAAVWWYDLVICLDFWDSEELSLR. The chain crosses the membrane as a helical span at residues 195 to 215; sequence MLEVLGGFLPFLLLLVCHVLT. The Cytoplasmic portion of the chain corresponds to 216–257; the sequence is QATACRTCHRQQQPAACRGFARVARTILSAYVVLRLPYQLAQ. Residues 258–278 traverse the membrane as a helical segment; it reads LLYLAFLWDVYSGYLLWEALV. At 279–281 the chain is on the extracellular side; that stretch reads YSD. Residues 282–302 form a helical membrane-spanning segment; sequence YLILLNSCLSPFLCLMASADL. Residues 303 to 470 lie on the Cytoplasmic side of the membrane; it reads RTLLRSVLSS…PEAAPGAGPT (168 aa). A disordered region spans residues 322-470; that stretch reads PGSFTPTEPQ…PEAAPGAGPT (149 aa). 2 stretches are compositionally biased toward polar residues: residues 325–335 and 348–414; these read FTPTEPQTQLD and AQSQ…NVQT. Residues 415 to 425 are compositionally biased toward low complexity; the sequence is PAPAASSVPSP.

This sequence belongs to the G-protein coupled receptor 1 family.

The protein localises to the cell membrane. Its function is as follows. Orphan receptor. This Homo sapiens (Human) protein is Probable G-protein coupled receptor 152 (GPR152).